The chain runs to 227 residues: Lipoprotein-releasing system ATP-binding protein LolD (227 aa).

The ABC transporter domain occupies 6 to 227 (LTSQKLYKSY…LHEGSLYARE (222 aa)). Residue 42 to 49 (GPSGSGKS) participates in ATP binding.

Belongs to the ABC transporter superfamily. Lipoprotein translocase (TC 3.A.1.125) family. As to quaternary structure, the complex is composed of two ATP-binding proteins (LolD) and two transmembrane proteins (LolC and LolE).

It is found in the cell inner membrane. Functionally, part of the ABC transporter complex LolCDE involved in the translocation of mature outer membrane-directed lipoproteins, from the inner membrane to the periplasmic chaperone, LolA. Responsible for the formation of the LolA-lipoprotein complex in an ATP-dependent manner. The protein is Lipoprotein-releasing system ATP-binding protein LolD of Legionella pneumophila (strain Paris).